Here is a 280-residue protein sequence, read N- to C-terminus: Phosphonoacetaldehyde hydrolase (280 aa).

Catalysis depends on D23, which acts as the Nucleophile. Mg(2+)-binding residues include D23 and A25. K64 serves as the catalytic Schiff-base intermediate with substrate. Residue D197 participates in Mg(2+) binding.

The protein belongs to the HAD-like hydrolase superfamily. PhnX family. Homodimer. The cofactor is Mg(2+).

The catalysed reaction is phosphonoacetaldehyde + H2O = acetaldehyde + phosphate + H(+). In terms of biological role, involved in phosphonate degradation. The chain is Phosphonoacetaldehyde hydrolase from Bordetella avium (strain 197N).